The chain runs to 404 residues: Probable tRNA sulfurtransferase (404 aa).

The region spanning 60-165 (QPVAESLKQI…EEAAYISYET (106 aa)) is the THUMP domain. ATP is bound by residues 183–184 (ML), 208–209 (HF), Arg265, Gly287, and Gln296.

This sequence belongs to the ThiI family.

The protein localises to the cytoplasm. The enzyme catalyses [ThiI sulfur-carrier protein]-S-sulfanyl-L-cysteine + a uridine in tRNA + 2 reduced [2Fe-2S]-[ferredoxin] + ATP + H(+) = [ThiI sulfur-carrier protein]-L-cysteine + a 4-thiouridine in tRNA + 2 oxidized [2Fe-2S]-[ferredoxin] + AMP + diphosphate. It carries out the reaction [ThiS sulfur-carrier protein]-C-terminal Gly-Gly-AMP + S-sulfanyl-L-cysteinyl-[cysteine desulfurase] + AH2 = [ThiS sulfur-carrier protein]-C-terminal-Gly-aminoethanethioate + L-cysteinyl-[cysteine desulfurase] + A + AMP + 2 H(+). It participates in cofactor biosynthesis; thiamine diphosphate biosynthesis. Catalyzes the ATP-dependent transfer of a sulfur to tRNA to produce 4-thiouridine in position 8 of tRNAs, which functions as a near-UV photosensor. Also catalyzes the transfer of sulfur to the sulfur carrier protein ThiS, forming ThiS-thiocarboxylate. This is a step in the synthesis of thiazole, in the thiamine biosynthesis pathway. The sulfur is donated as persulfide by IscS. The chain is Probable tRNA sulfurtransferase from Streptococcus gordonii (strain Challis / ATCC 35105 / BCRC 15272 / CH1 / DL1 / V288).